A 585-amino-acid polypeptide reads, in one-letter code: Organic cation transporter 1 (585 aa).

Residues 1–40 (MSFQAMETFAEISQEILMSATKPPDFDFVLEQVGNYGTYQ) lie on the Cytoplasmic side of the membrane. The chain crosses the membrane as a helical span at residues 41–61 (IVFFFIICLPTSLPSAFSAFN). The Extracellular segment spans residues 62–155 (IPFVVGNPPH…LVCDQQAWIE (94 aa)). Residues N87, N98, and N133 are each glycosylated (N-linked (GlcNAc...) asparagine). Residues 156–176 (ISTTSFYVGSFIGNCLFGYVA) traverse the membrane as a helical segment. The Cytoplasmic portion of the chain corresponds to 177 to 184 (DKFGRRRS). Residues 185-205 (FFVILTVLIVCGTASSFAKDI) traverse the membrane as a helical segment. Residues 206–212 (ESFIILR) are Extracellular-facing. The helical transmembrane segment at 213 to 233 (FFTGLAFPALFQIPFIICMEF) threads the bilayer. Over 234–243 (MGNSGRIFSG) the chain is Cytoplasmic. The helical transmembrane segment at 244 to 264 (LMTSLFFGAAMALLGVVAMFI) threads the bilayer. Over 265-269 (RRWRQ) the chain is Extracellular. The chain crosses the membrane as a helical span at residues 270–290 (LTFFCNAPFAFYIIYYFFLPE). At 291 to 360 (SPRWSVSVGK…FKTPNLRRKT (70 aa)) the chain is on the cytoplasmic side. Residues 361–381 (LIVTYIWVMNAIIYNGLTLNV) traverse the membrane as a helical segment. Over 382–389 (SNLPVDDY) the chain is Extracellular. A helical transmembrane segment spans residues 390–410 (WSFIINGAVELPGYFVVWPLL). Over 411–416 (QCAGRR) the chain is Cytoplasmic. Residues 417–437 (WTLAATMIVCGIGCVSAMFMP) form a helical membrane-spanning segment. Over 438–446 (DGYPWLVAS) the chain is Extracellular. The helical transmembrane segment at 447–467 (ASFIGKFGVGSGFAVIYIFAG) threads the bilayer. The Cytoplasmic portion of the chain corresponds to 468–476 (ELYPTVVRA). A helical membrane pass occupies residues 477–497 (IGMGMSSMVAGSGLLLAPHIV). Residues 498 to 504 (NLGKIVK) are Extracellular-facing. Residues 505–525 (ILPLLIMGLMALSAGILTFFL) form a helical membrane-spanning segment. At 526-585 (PETLGAPLPMTIEDAENFGKKPEPDSGMFTQAAKKRESQPLLEPHTPMDRRRRSSRLMNI) the chain is on the cytoplasmic side. The interval 544 to 585 (GKKPEPDSGMFTQAAKKRESQPLLEPHTPMDRRRRSSRLMNI) is disordered. Residues 575–585 (RRRRSSRLMNI) show a composition bias toward basic residues.

It belongs to the major facilitator (TC 2.A.1) superfamily. Organic cation transporter (TC 2.A.1.19) family.

It is found in the membrane. In terms of biological role, transports organic cations such as tetraethylammonium (TEA). Displays a broad substrate specificity. The polypeptide is Organic cation transporter 1 (oct-1) (Caenorhabditis elegans).